Consider the following 329-residue polypeptide: MLQLRSPPPATSSPSSAVSFPTLAPRLLPLRRRRRGAGSQLGGKTSSAVRASSAAAPGATEPEVMVEVAHREVARALASLAEARLGARLLPSAVPPDVAEFRSGGGAGNAVGSLDVRRGAPGSTIDFMLQSSLHCKVPNGAIDITSLLIFLNASTDAPHFLMEFIQGSPTSIVVLLDLLPRKDLALHPEYIERYYENTQVDKQREKVEELPQARPYRSRSLFVRSTFSLTAILMSIDCGQGGEGTLEEIVRGQLATAARALLQIWLDSCADHTSEMEEGERENMIKRDQIVRSKSIEVDLTSNLPRMFGPDVADRVIAEIQKAFGVQEA.

Pro residues predominate over residues 1–11 (MLQLRSPPPAT). The N-terminal 50 residues, 1–50 (MLQLRSPPPATSSPSSAVSFPTLAPRLLPLRRRRRGAGSQLGGKTSSAVR), are a transit peptide targeting the chloroplast. A disordered region spans residues 1-61 (MLQLRSPPPA…SSAAAPGATE (61 aa)). Low complexity-rich tracts occupy residues 12-28 (SSPS…PRLL) and 46-59 (SSAV…APGA). Residues Glu-163, 216–218 (YRS), and Asp-299 contribute to the red chlorophyll catabolite site.

Expressed in leaves. Expressed at low levels in roots, stems, panicles and seeds.

It localises to the plastid. Its subcellular location is the chloroplast. The catalysed reaction is primary fluorescent chlorophyll catabolite + 2 oxidized [2Fe-2S]-[ferredoxin] = red chlorophyll catabolite + 2 reduced [2Fe-2S]-[ferredoxin] + 3 H(+). It participates in porphyrin-containing compound metabolism; chlorophyll degradation. Catalyzes the key reaction of chlorophyll catabolism, porphyrin macrocycle cleavage of pheophorbide a (pheide a) to a primary fluorescent catabolite (pFCC). Works in a two-step reaction with pheophorbide a oxygenase (PaO) by reducing the C20/C1 double bond of the intermediate, RCC. Belongs to the chlorophyll catabolic enzymes (CCEs). May play a role in senescence and response to wounding. The sequence is that of Red chlorophyll catabolite reductase 1, chloroplastic from Oryza sativa subsp. japonica (Rice).